The chain runs to 178 residues: Large ribosomal subunit protein uL30 (178 aa).

The protein belongs to the universal ribosomal protein uL30 family. In terms of assembly, part of the 50S ribosomal subunit.

This is Large ribosomal subunit protein uL30 from Pyrobaculum aerophilum (strain ATCC 51768 / DSM 7523 / JCM 9630 / CIP 104966 / NBRC 100827 / IM2).